Here is a 367-residue protein sequence, read N- to C-terminus: Uroporphyrinogen decarboxylase (367 aa).

M1 carries the post-translational modification N-acetylmethionine. The coproporphyrinogen I site is built by R37, A39, R41, R50, D86, Y164, S219, and H339. Positions 37, 39, and 41 each coordinate coproporphyrinogen III. 4 residues coordinate coproporphyrinogen III: D86, Y164, S219, and H339.

It belongs to the uroporphyrinogen decarboxylase family. As to quaternary structure, homodimer.

The protein resides in the cytoplasm. Its subcellular location is the cytosol. The enzyme catalyses uroporphyrinogen III + 4 H(+) = coproporphyrinogen III + 4 CO2. It carries out the reaction uroporphyrinogen I + 4 H(+) = coproporphyrinogen I + 4 CO2. It functions in the pathway porphyrin-containing compound metabolism; protoporphyrin-IX biosynthesis; coproporphyrinogen-III from 5-aminolevulinate: step 4/4. Its function is as follows. Catalyzes the sequential decarboxylation of the four acetate side chains of uroporphyrinogen to form coproporphyrinogen and participates in the fifth step in the heme biosynthetic pathway. Isomer I or isomer III of uroporphyrinogen may serve as substrate, but only coproporphyrinogen III can ultimately be converted to heme. In vitro also decarboxylates pentacarboxylate porphyrinogen I. The sequence is that of Uroporphyrinogen decarboxylase from Ovis aries (Sheep).